The primary structure comprises 336 residues: Ribosomal RNA large subunit methyltransferase F (336 aa).

It belongs to the methyltransferase superfamily. METTL16/RlmF family.

It is found in the cytoplasm. It catalyses the reaction adenosine(1618) in 23S rRNA + S-adenosyl-L-methionine = N(6)-methyladenosine(1618) in 23S rRNA + S-adenosyl-L-homocysteine + H(+). Its function is as follows. Specifically methylates the adenine in position 1618 of 23S rRNA. The sequence is that of Ribosomal RNA large subunit methyltransferase F from Yersinia pseudotuberculosis serotype I (strain IP32953).